A 55-amino-acid chain; its full sequence is MAKDGPRIIVKMESSAGTGFYYTTTKNRRNTQAKLELKKYDPVAKKHVVFREKKV.

It belongs to the bacterial ribosomal protein bL33 family. Part of the 50S ribosomal subunit. Contacts protein L35.

Its function is as follows. Binds the 23S rRNA and the E site tRNA. The protein is Large ribosomal subunit protein bL33 (rpmG) of Deinococcus radiodurans (strain ATCC 13939 / DSM 20539 / JCM 16871 / CCUG 27074 / LMG 4051 / NBRC 15346 / NCIMB 9279 / VKM B-1422 / R1).